A 653-amino-acid polypeptide reads, in one-letter code: uncharacterized protein (653 aa).

Helical transmembrane passes span 39–59 (AMTT…LKLI) and 207–227 (AVFV…AFTI). One can recognise an HAMP domain in the interval 225-277 (FTITKPIRELLTGVKNIASGDFHQRISLPFGGELGALIFNFNEMAERLEKYEQ). In terms of domain architecture, PAS spans 286-356 (EKAKLETLVS…PALNDIVRKN (71 aa)). Residues 421–651 (NVSHELRTPL…CFFFDLIIAK (231 aa)) enclose the Histidine kinase domain. Residue H424 is modified to Phosphohistidine; by autocatalysis.

It localises to the plastid. Its subcellular location is the chloroplast membrane. It catalyses the reaction ATP + protein L-histidine = ADP + protein N-phospho-L-histidine.. This is an uncharacterized protein from Pyropia yezoensis (Susabi-nori).